The sequence spans 104 residues: uncharacterized protein (104 aa).

Residues 1 to 24 (MISTEKSSDAVAMHCPSGDQHNSE) form a disordered region.

This is an uncharacterized protein from Saccharomyces cerevisiae (strain ATCC 204508 / S288c) (Baker's yeast).